The primary structure comprises 471 residues: Neuraminidase (471 aa).

Residues 1–6 (MNPNQK) are Intravirion-facing. The helical transmembrane segment at 7–27 (IICISATGMTLSVVSLLIGIA) threads the bilayer. An involved in apical transport and lipid raft association region spans residues 11–33 (SATGMTLSVVSLLIGIANLGLNI). The Virion surface segment spans residues 28 to 471 (NLGLNIGLHY…HDGAEIIYFK (444 aa)). Residues 36 to 89 (HYKVGDTPDVNTPNVNGTNSTTTTIINNNTQNNFTNITNIIHNKNEERTFLNLT) are hypervariable stalk region. N-linked (GlcNAc...) asparagine; by host glycans are attached at residues asparagine 51, asparagine 54, asparagine 63, asparagine 68, asparagine 71, and asparagine 87. The head of neuraminidase stretch occupies residues 92-471 (LCEVNSWHIL…HDGAEIIYFK (380 aa)). Intrachain disulfides connect cysteine 93/cysteine 420, cysteine 125/cysteine 130, cysteine 185/cysteine 232, cysteine 234/cysteine 239, cysteine 280/cysteine 293, cysteine 282/cysteine 291, cysteine 320/cysteine 338, and cysteine 424/cysteine 450. Substrate is bound at residue arginine 119. N-linked (GlcNAc...) asparagine; by host glycosylation is present at asparagine 147. The active-site Proton donor/acceptor is the aspartate 152. Arginine 153 provides a ligand contact to substrate. Residue asparagine 202 is glycosylated (N-linked (GlcNAc...) asparagine; by host). 278-279 (EE) contacts substrate. Arginine 294 is a binding site for substrate. Positions 295, 299, and 326 each coordinate Ca(2+). A substrate-binding site is contributed by arginine 373. A glycan (N-linked (GlcNAc...) asparagine; by host) is linked at asparagine 403. The Nucleophile role is filled by tyrosine 407.

It belongs to the glycosyl hydrolase 34 family. Homotetramer. Requires Ca(2+) as cofactor. N-glycosylated.

The protein localises to the virion membrane. Its subcellular location is the host apical cell membrane. It carries out the reaction Hydrolysis of alpha-(2-&gt;3)-, alpha-(2-&gt;6)-, alpha-(2-&gt;8)- glycosidic linkages of terminal sialic acid residues in oligosaccharides, glycoproteins, glycolipids, colominic acid and synthetic substrates.. Its activity is regulated as follows. Inhibited by the neuraminidase inhibitors zanamivir (Relenza) and oseltamivir (Tamiflu). These drugs interfere with the release of progeny virus from infected cells and are effective against all influenza strains. Resistance to neuraminidase inhibitors is quite rare. In terms of biological role, catalyzes the removal of terminal sialic acid residues from viral and cellular glycoconjugates. Cleaves off the terminal sialic acids on the glycosylated HA during virus budding to facilitate virus release. Additionally helps virus spread through the circulation by further removing sialic acids from the cell surface. These cleavages prevent self-aggregation and ensure the efficient spread of the progeny virus from cell to cell. Otherwise, infection would be limited to one round of replication. Described as a receptor-destroying enzyme because it cleaves a terminal sialic acid from the cellular receptors. May facilitate viral invasion of the upper airways by cleaving the sialic acid moieties on the mucin of the airway epithelial cells. Likely to plays a role in the budding process through its association with lipid rafts during intracellular transport. May additionally display a raft-association independent effect on budding. Plays a role in the determination of host range restriction on replication and virulence. Sialidase activity in late endosome/lysosome traffic seems to enhance virus replication. In Influenza A virus (strain A/Gull/Maryland/704/1977 H13N6), this protein is Neuraminidase.